A 564-amino-acid chain; its full sequence is Dihydroxy-acid dehydratase (564 aa).

Cys-51 is a binding site for [2Fe-2S] cluster. Asp-83 contributes to the Mg(2+) binding site. Position 124 (Cys-124) interacts with [2Fe-2S] cluster. Mg(2+) is bound by residues Asp-125 and Lys-126. N6-carboxylysine is present on Lys-126. Cys-196 contributes to the [2Fe-2S] cluster binding site. Glu-448 serves as a coordination point for Mg(2+). Residue Ser-474 is the Proton acceptor of the active site.

The protein belongs to the IlvD/Edd family. As to quaternary structure, homodimer. [2Fe-2S] cluster is required as a cofactor. Mg(2+) serves as cofactor.

The enzyme catalyses (2R)-2,3-dihydroxy-3-methylbutanoate = 3-methyl-2-oxobutanoate + H2O. It carries out the reaction (2R,3R)-2,3-dihydroxy-3-methylpentanoate = (S)-3-methyl-2-oxopentanoate + H2O. The protein operates within amino-acid biosynthesis; L-isoleucine biosynthesis; L-isoleucine from 2-oxobutanoate: step 3/4. It participates in amino-acid biosynthesis; L-valine biosynthesis; L-valine from pyruvate: step 3/4. In terms of biological role, functions in the biosynthesis of branched-chain amino acids. Catalyzes the dehydration of (2R,3R)-2,3-dihydroxy-3-methylpentanoate (2,3-dihydroxy-3-methylvalerate) into 2-oxo-3-methylpentanoate (2-oxo-3-methylvalerate) and of (2R)-2,3-dihydroxy-3-methylbutanoate (2,3-dihydroxyisovalerate) into 2-oxo-3-methylbutanoate (2-oxoisovalerate), the penultimate precursor to L-isoleucine and L-valine, respectively. The polypeptide is Dihydroxy-acid dehydratase (Polynucleobacter asymbioticus (strain DSM 18221 / CIP 109841 / QLW-P1DMWA-1) (Polynucleobacter necessarius subsp. asymbioticus)).